We begin with the raw amino-acid sequence, 558 residues long: SPATS2-like protein (558 aa).

Ala-2 bears the N-acetylalanine mark. Residues Gly-63–Gln-79 show a composition bias toward basic residues. Disordered stretches follow at residues Gly-63–Thr-148 and Asp-161–Pro-202. Basic and acidic residues-rich tracts occupy residues Gly-80–Glu-92 and Gly-110–Arg-142. Ser-120 carries the phosphoserine modification. A coiled-coil region spans residues Lys-279–Leu-344. Positions Lys-383–Ala-514 are disordered. Over residues Asp-416 to Asn-433 the composition is skewed to polar residues. Ser-455 is subject to Phosphoserine. Residues His-469–Gly-485 are compositionally biased toward basic residues.

The protein belongs to the SPATS2 family.

It is found in the cytoplasm. Its subcellular location is the nucleus. The protein resides in the nucleolus. This chain is SPATS2-like protein (Spats2l), found in Rattus norvegicus (Rat).